A 244-amino-acid polypeptide reads, in one-letter code: Ras-like protein family member 11B (244 aa).

The segment at 19-242 (PSSRVIKIAV…VLSAKVRTVT (224 aa)) is small GTPase-like. GTP is bound by residues 30–37 (GGSGVGKT), 77–81 (DTPGV), and 142–145 (NKAD). A disordered region spans residues 200–222 (INATSSVTEKKRSPLIPRPKSPN).

Belongs to the small GTPase superfamily. Ras family.

It carries out the reaction GTP + H2O = GDP + phosphate + H(+). This Danio rerio (Zebrafish) protein is Ras-like protein family member 11B.